The chain runs to 121 residues: Large ribosomal subunit protein bL20 (121 aa).

Belongs to the bacterial ribosomal protein bL20 family.

Its function is as follows. Binds directly to 23S ribosomal RNA and is necessary for the in vitro assembly process of the 50S ribosomal subunit. It is not involved in the protein synthesizing functions of that subunit. This is Large ribosomal subunit protein bL20 from Chlamydia caviae (strain ATCC VR-813 / DSM 19441 / 03DC25 / GPIC) (Chlamydophila caviae).